The primary structure comprises 414 residues: Cytochrome c biogenesis protein Ccs1 (414 aa).

3 helical membrane passes run 14-34 (LTVA…GTVI), 73-93 (SWWF…CTIT), and 159-179 (VSPI…MLST).

Belongs to the Ccs1/CcsB family. In terms of assembly, may interact with CcsA.

It localises to the plastid. The protein resides in the chloroplast thylakoid membrane. Required during biogenesis of c-type cytochromes (cytochrome c6 and cytochrome f) at the step of heme attachment. The sequence is that of Cytochrome c biogenesis protein Ccs1 from Guillardia theta (Cryptophyte).